The sequence spans 89 residues: Small ribosomal subunit protein bS18 (89 aa).

This sequence belongs to the bacterial ribosomal protein bS18 family. As to quaternary structure, part of the 30S ribosomal subunit. Forms a tight heterodimer with protein bS6.

Its function is as follows. Binds as a heterodimer with protein bS6 to the central domain of the 16S rRNA, where it helps stabilize the platform of the 30S subunit. The polypeptide is Small ribosomal subunit protein bS18 (Phocaeicola vulgatus (strain ATCC 8482 / DSM 1447 / JCM 5826 / CCUG 4940 / NBRC 14291 / NCTC 11154) (Bacteroides vulgatus)).